The following is a 684-amino-acid chain: ATP-dependent DNA helicase RecG (684 aa).

The segment at 51–148 (RHIASMATLQ…ADVPQFQAPH (98 aa)) is wedge domain. The Helicase ATP-binding domain maps to 278–439 (DLARHRPMRR…VHADLEVSVI (162 aa)). 291–298 (GDVGSGKT) contributes to the ATP binding site. The DEAH box signature appears at 392-395 (DEQH).

It belongs to the helicase family. RecG subfamily. As to quaternary structure, monomer.

The catalysed reaction is Couples ATP hydrolysis with the unwinding of duplex DNA by translocating in the 3'-5' direction.. It catalyses the reaction ATP + H2O = ADP + phosphate + H(+). In terms of biological role, plays a critical role in recombination and DNA repair. Helps process Holliday junction intermediates to mature products by catalyzing branch migration. Has replication fork regression activity, unwinds stalled or blocked replication forks to make a HJ that can be resolved. Has a DNA unwinding activity characteristic of a DNA helicase with 3'-5' polarity. In Acidithiobacillus ferridurans, this protein is ATP-dependent DNA helicase RecG.